The following is a 251-amino-acid chain: Probable phosphatase Sama_2233 (251 aa).

Residues His8, His10, His16, His41, Glu74, His102, His132, Asp193, and His195 each coordinate Zn(2+).

This sequence belongs to the PHP family. It depends on Zn(2+) as a cofactor.

The sequence is that of Probable phosphatase Sama_2233 from Shewanella amazonensis (strain ATCC BAA-1098 / SB2B).